Consider the following 97-residue polypeptide: YcgL domain-containing protein PP_4590 (97 aa).

One can recognise a YcgL domain in the interval 3–87 (RICSIYKSPR…LEDEYIEHLP (85 aa)).

The sequence is that of YcgL domain-containing protein PP_4590 from Pseudomonas putida (strain ATCC 47054 / DSM 6125 / CFBP 8728 / NCIMB 11950 / KT2440).